We begin with the raw amino-acid sequence, 187 residues long: MKIKPCKSQVFRLEPIIGSRKYINYFWSFSIFFGAFGFLIVGICSYLKKELFFFSAENIIFIPQGAVMCFYGIAGIFLSFYLWFTMILGVGSGFNEFNKNEGIVNIFRWGFPGQNRRIKICCLIKDIKSIRIYIRDGISPRSALYLKIRGMPDIPLDVIEDRFNLNEIEKRATELASFLRVPIEGLE.

Helical transmembrane passes span 23-43 and 70-90; these read INYFWSFSIFFGAFGFLIVGI and FYGIAGIFLSFYLWFTMILGV.

This sequence belongs to the Ycf4 family.

The protein resides in the plastid. It localises to the chloroplast thylakoid membrane. Seems to be required for the assembly of the photosystem I complex. This Chara vulgaris (Common stonewort) protein is Photosystem I assembly protein Ycf4.